We begin with the raw amino-acid sequence, 198 residues long: Recombination protein RecR (198 aa).

The segment at 57–72 adopts a C4-type zinc-finger fold; sequence CDKCNTFTEAQICEVC. Residues 80 to 175 enclose the Toprim domain; the sequence is TLLCVVETPA…AVTRLARGVP (96 aa).

This sequence belongs to the RecR family.

Its function is as follows. May play a role in DNA repair. It seems to be involved in an RecBC-independent recombinational process of DNA repair. It may act with RecF and RecO. In Burkholderia multivorans (strain ATCC 17616 / 249), this protein is Recombination protein RecR.